Here is a 128-residue protein sequence, read N- to C-terminus: V-type proton ATPase subunit F (128 aa).

The protein belongs to the V-ATPase F subunit family. In terms of assembly, V-ATPase is a heteromultimeric enzyme composed of a peripheral catalytic V1 complex (components A to H) attached to an integral membrane V0 proton pore complex (components: a, c, c'', d and e).

Its subcellular location is the vacuole membrane. Subunit of the peripheral V1 complex of vacuolar ATPase essential for assembly or catalytic function. V-ATPase is responsible for acidifying a variety of intracellular compartments in eukaryotic cells. The chain is V-type proton ATPase subunit F (VHA-F) from Arabidopsis thaliana (Mouse-ear cress).